Reading from the N-terminus, the 222-residue chain is 26S proteasome non-ATPase regulatory subunit 9 (222 aa).

The region spanning 108-194 is the PDZ domain; sequence QARDMAEARE…KPLNVMVIRR (87 aa). The residue at position 128 (Ser-128) is a Phosphoserine.

This sequence belongs to the proteasome subunit p27 family. In terms of assembly, interacts with PSMC3. Part of a transient complex (modulator) containing PSMD9, PSMC6 and PSMC3 formed during the assembly of the 26S proteasome.

Its function is as follows. Acts as a chaperone during the assembly of the 26S proteasome, specifically of the base subcomplex of the PA700/19S regulatory complex (RC). During the base subcomplex assembly is part of an intermediate PSMD9:PSMC6:PSMC3 module, also known as modulator trimer complex; PSMD9 is released during the further base assembly process. In Rattus norvegicus (Rat), this protein is 26S proteasome non-ATPase regulatory subunit 9 (Psmd9).